Consider the following 1693-residue polypeptide: Latrophilin Cirl (1693 aa).

Residues 1–774 are Extracellular-facing; sequence MVLQGAKQRL…LFTMFDGNMR (774 aa). Positions 30–119 constitute an SUEL-type lectin domain; that stretch reads ACEGKKLTIE…KYLEAHYQCV (90 aa). N-linked (GlcNAc...) asparagine glycosylation is found at Asn147, Asn260, Asn306, and Asn345. The disordered stretch occupies residues 190-309; that stretch reads PPATHATPPG…GPSVSSNGSA (120 aa). 2 stretches are compositionally biased toward polar residues: residues 259 to 269 and 287 to 309; these read SNATAPSNTRI and KSSPNRTPGTAASGPSVSSNGSA. Residues 379 to 406 form a disordered region; it reads SFDEDDEEMAGTSTTTPMSTSGDCLHNS. The span at 390–399 shows a compositional bias: low complexity; that stretch reads TSTTTPMSTS. Residues Asn405, Asn662, Asn710, and Asn737 are each glycosylated (N-linked (GlcNAc...) asparagine). Residues 568–761 form the GAIN-B domain; sequence RSVVQKVKNI…AILMDVVDEH (194 aa). 2 cysteine pairs are disulfide-bonded: Cys716–Cys743 and Cys731–Cys745. The tract at residues 716–761 is GPS; the sequence is CVFWNYIDHAWSANGCSLESTNRTHSVCSCNHLTNFAILMDVVDEH. Residues 775–795 form a helical membrane-spanning segment; sequence IFIYISIAICVVFIVIALLTL. Topologically, residues 796 to 808 are cytoplasmic; the sequence is KLFNGVFVKSART. Residues 809–829 form a helical membrane-spanning segment; it reads SIYINIYICLLAIELLFLLGI. Over 830–835 the chain is Extracellular; sequence EQTETS. A helical membrane pass occupies residues 836 to 856; sequence IFCGFITVFLHCAILSGTSWF. The Cytoplasmic segment spans residues 857–882; it reads CYEAFHSYSTLTSDELLLEVDQTPKV. Residues 883 to 903 form a helical membrane-spanning segment; it reads NCYYLLSYGLSLSVVAISLVI. Residues 904–927 lie on the Extracellular side of the membrane; the sequence is NPSTYTQNDYCVLMEANAVFYATF. A helical transmembrane segment spans residues 928-948; it reads VAPVLIFFMAAIGYTFLSWII. Topologically, residues 949 to 975 are cytoplasmic; it reads MCRKSRTGLKTKEHTRLATVRFDIRCS. A helical transmembrane segment spans residues 976 to 996; the sequence is FVFFLLLSAVWCSAYFYLRGA. Over 997 to 1003 the chain is Extracellular; the sequence is KMDEDVT. The chain crosses the membrane as a helical span at residues 1004–1024; that stretch reads GIYGYNFICFNTLLGLYIFVF. The Cytoplasmic portion of the chain corresponds to 1025 to 1693; it reads HCIQNEKIRR…VRCYLEPLAK (669 aa). Positions 1089–1109 are disordered; that stretch reads PLGTNDDAHDEQQQQQHMSAT. A phosphoserine mark is found at Ser1165, Ser1256, and Ser1263. Disordered stretches follow at residues 1237–1264, 1279–1362, 1450–1529, and 1596–1678; these read KPNSQHGKKKRGGVGAIPASPSGSLHSR, KTKP…APPP, SRYG…LPPQ, and SMRG…SAML. Low complexity predominate over residues 1307–1323; that stretch reads QQQQQLRQQRQQQQQQL. Phosphoserine occurs at positions 1324 and 1325. Positions 1337 to 1357 are enriched in low complexity; sequence LHLQHQQQQQQQRRAGGQQQL. A compositionally biased stretch (polar residues) spans 1464-1475; sequence RNQQQQQHSLAQ. 2 stretches are compositionally biased toward acidic residues: residues 1485 to 1498 and 1508 to 1521; these read DEDDDEDEDDEETT and CDEEEEDEESDMED. Positions 1640-1663 are enriched in low complexity; it reads QQLQKLSPQSTTSSSSHTSHSNPH.

This sequence belongs to the G-protein coupled receptor 2 family. LN-TM7 subfamily. As to quaternary structure, forms a heterodimer, consisting of a large extracellular region non-covalently linked to a seven-transmembrane moiety. Post-translationally, proteolytically cleaved into 2 subunits, an extracellular subunit and a seven-transmembrane subunit.

The protein resides in the cell membrane. The polypeptide is Latrophilin Cirl (Drosophila pseudoobscura pseudoobscura (Fruit fly)).